The chain runs to 392 residues: Phosphoglycerate kinase (392 aa).

Residues 21 to 23 (DLN), arginine 36, 59 to 62 (HLGR), arginine 113, and arginine 146 each bind substrate. ATP is bound by residues lysine 197, glutamate 319, and 345–348 (GGDT).

It belongs to the phosphoglycerate kinase family. Monomer.

The protein localises to the cytoplasm. The enzyme catalyses (2R)-3-phosphoglycerate + ATP = (2R)-3-phospho-glyceroyl phosphate + ADP. It functions in the pathway carbohydrate degradation; glycolysis; pyruvate from D-glyceraldehyde 3-phosphate: step 2/5. The polypeptide is Phosphoglycerate kinase (Nitrosococcus oceani (strain ATCC 19707 / BCRC 17464 / JCM 30415 / NCIMB 11848 / C-107)).